The chain runs to 525 residues: Rho guanine nucleotide exchange factor gef3 (525 aa).

The 197-residue stretch at 72–268 (AIISVLEEFR…EIASQRMNEL (197 aa)) folds into the DH domain.

Its subcellular location is the cytoplasm. In terms of biological role, has a role in the control of cell polarity and cytokinesis. Involved in bipolar growth and septum formation. The protein is Rho guanine nucleotide exchange factor gef3 (gef3) of Schizosaccharomyces pombe (strain 972 / ATCC 24843) (Fission yeast).